The following is a 208-amino-acid chain: Small ribosomal subunit protein uS4 (208 aa).

Residues 95–157 enclose the S4 RNA-binding domain; it reads RRIDNVVYRA…DRLKKLVRSN (63 aa).

Belongs to the universal ribosomal protein uS4 family. In terms of assembly, part of the 30S ribosomal subunit. Contacts protein S5. The interaction surface between S4 and S5 is involved in control of translational fidelity.

In terms of biological role, one of the primary rRNA binding proteins, it binds directly to 16S rRNA where it nucleates assembly of the body of the 30S subunit. Functionally, with S5 and S12 plays an important role in translational accuracy. The sequence is that of Small ribosomal subunit protein uS4 from Borrelia turicatae (strain 91E135).